Consider the following 918-residue polypeptide: Probable lipoxygenase 6 (918 aa).

The disordered stretch occupies residues 56-76 (AASPSSGIKGGGAGERRPAPE). Positions 90–218 (QKEDIKEAVA…ELPTKRVFFS (129 aa)) constitute a PLAT domain. The region spanning 221 to 918 (PYLPSETPPG…CRGVPNSISI (698 aa)) is the Lipoxygenase domain. Residues histidine 573, histidine 578, histidine 765, asparagine 769, and isoleucine 918 each contribute to the Fe cation site.

This sequence belongs to the lipoxygenase family. Requires Fe cation as cofactor.

The catalysed reaction is (9Z,12Z)-octadecadienoate + O2 = (13S)-hydroperoxy-(9Z,11E)-octadecadienoate. The enzyme catalyses (9Z,12Z,15Z)-octadecatrienoate + O2 = (13S)-hydroperoxy-(9Z,11E,15Z)-octadecatrienoate. It functions in the pathway lipid metabolism; oxylipin biosynthesis. In terms of biological role, plant lipoxygenase may be involved in a number of diverse aspects of plant physiology including growth and development, pest resistance, and senescence or responses to wounding. Catalyzes the hydroperoxidation of lipids containing a cis,cis-1,4-pentadiene structure. The protein is Probable lipoxygenase 6 of Oryza sativa subsp. japonica (Rice).